Reading from the N-terminus, the 429-residue chain is Cyclin-B2-1 (429 aa).

This sequence belongs to the cyclin family. Cyclin AB subfamily. As to quaternary structure, interacts with CDC20-1 and CDC20-2. As to expression, expressed in roots, stems, leaves, flowers and siliques.

In Arabidopsis thaliana (Mouse-ear cress), this protein is Cyclin-B2-1 (CYCB2-1).